Here is a 414-residue protein sequence, read N- to C-terminus: Lipoyl synthase, mitochondrial (414 aa).

The N-terminal 18 residues, 1–18 (MYRRSVGVLFVGRNTRWI), are a transit peptide targeting the mitochondrion. Residues 51 to 67 (GNSTEVENATSQLTGTS) show a composition bias toward polar residues. Residues 51–75 (GNSTEVENATSQLTGTSGKRRKGNR) are disordered. Residues cysteine 150, cysteine 155, cysteine 161, cysteine 181, cysteine 185, cysteine 188, and serine 396 each contribute to the [4Fe-4S] cluster site. Residues 164-385 (GKDKSKATAT…KERALEMGFL (222 aa)) enclose the Radical SAM core domain.

The protein belongs to the radical SAM superfamily. Lipoyl synthase family. [4Fe-4S] cluster is required as a cofactor.

The protein localises to the mitochondrion. It carries out the reaction [[Fe-S] cluster scaffold protein carrying a second [4Fe-4S](2+) cluster] + N(6)-octanoyl-L-lysyl-[protein] + 2 oxidized [2Fe-2S]-[ferredoxin] + 2 S-adenosyl-L-methionine + 4 H(+) = [[Fe-S] cluster scaffold protein] + N(6)-[(R)-dihydrolipoyl]-L-lysyl-[protein] + 4 Fe(3+) + 2 hydrogen sulfide + 2 5'-deoxyadenosine + 2 L-methionine + 2 reduced [2Fe-2S]-[ferredoxin]. Its pathway is protein modification; protein lipoylation via endogenous pathway; protein N(6)-(lipoyl)lysine from octanoyl-[acyl-carrier-protein]: step 2/2. Catalyzes the radical-mediated insertion of two sulfur atoms into the C-6 and C-8 positions of the octanoyl moiety bound to the lipoyl domains of lipoate-dependent enzymes, thereby converting the octanoylated domains into lipoylated derivatives. In Saccharomyces cerevisiae (strain RM11-1a) (Baker's yeast), this protein is Lipoyl synthase, mitochondrial.